The primary structure comprises 132 residues: Large ribosomal subunit protein uL14 (132 aa).

It belongs to the universal ribosomal protein uL14 family. As to quaternary structure, part of the 50S ribosomal subunit. Forms a cluster with proteins L3 and L24e, part of which may contact the 16S rRNA in 2 intersubunit bridges.

Binds to 23S rRNA. Forms part of two intersubunit bridges in the 70S ribosome. The protein is Large ribosomal subunit protein uL14 of Halobacterium salinarum (strain ATCC 29341 / DSM 671 / R1).